The sequence spans 179 residues: uncharacterized protein (179 aa).

A disordered region spans residues 1–32 (MELQGAQEDLGISLSSPRRNHETRPGSKAKGR).

This is an uncharacterized protein from Homo sapiens (Human).